A 192-amino-acid polypeptide reads, in one-letter code: Signal peptidase complex catalytic subunit SEC11C (192 aa).

Residues 1–28 (MVRAGAVGTHLPTSSLDIFGDLRKMNKR) lie on the Cytoplasmic side of the membrane. Residues 29–48 (QLYYQVLNFAMIVSSALMIW) form a helical; Signal-anchor for type II membrane protein membrane-spanning segment. Over 49 to 192 (KGLIVLTGSE…GAYVLLKRES (144 aa)) the chain is Lumenal. Active-site charge relay system residues include serine 68, histidine 108, and aspartate 134. The C-terminal short (CTS) helix stretch occupies residues 177 to 188 (ALLAVMGAYVLL).

This sequence belongs to the peptidase S26B family. Component of the signal peptidase complex paralog C (SPC-C) composed of a catalytic subunit SEC11C and three accessory subunits SPCS1, SPCS2 and SPCS3. Within the complex, interacts with SPCS2 and SPCS3. The complex induces a local thinning of the ER membrane which is used to measure the length of the signal peptide (SP) h-region of protein substrates. This ensures the selectivity of the complex towards h-regions shorter than 18-20 amino acids. Post-translationally, may undergo processing at the N-terminus.

The protein resides in the endoplasmic reticulum membrane. It catalyses the reaction Cleavage of hydrophobic, N-terminal signal or leader sequences from secreted and periplasmic proteins.. Its function is as follows. Catalytic component of the signal peptidase complex (SPC) which catalyzes the cleavage of N-terminal signal sequences from nascent proteins as they are translocated into the lumen of the endoplasmic reticulum. Specifically cleaves N-terminal signal peptides that contain a hydrophobic alpha-helix (h-region) shorter than 18-20 amino acids. This is Signal peptidase complex catalytic subunit SEC11C (Sec11c) from Mus musculus (Mouse).